A 368-amino-acid chain; its full sequence is tRNA 2-selenouridine synthase (368 aa).

One can recognise a Rhodanese domain in the interval 15-138 (MLSGHPMIDV…MRQYLIEVID (124 aa)). Cys98 acts as the S-selanylcysteine intermediate in catalysis.

It belongs to the SelU family. As to quaternary structure, monomer.

The enzyme catalyses 5-methylaminomethyl-2-thiouridine(34) in tRNA + selenophosphate + (2E)-geranyl diphosphate + H2O + H(+) = 5-methylaminomethyl-2-selenouridine(34) in tRNA + (2E)-thiogeraniol + phosphate + diphosphate. It catalyses the reaction 5-methylaminomethyl-2-thiouridine(34) in tRNA + (2E)-geranyl diphosphate = 5-methylaminomethyl-S-(2E)-geranyl-thiouridine(34) in tRNA + diphosphate. It carries out the reaction 5-methylaminomethyl-S-(2E)-geranyl-thiouridine(34) in tRNA + selenophosphate + H(+) = 5-methylaminomethyl-2-(Se-phospho)selenouridine(34) in tRNA + (2E)-thiogeraniol. The catalysed reaction is 5-methylaminomethyl-2-(Se-phospho)selenouridine(34) in tRNA + H2O = 5-methylaminomethyl-2-selenouridine(34) in tRNA + phosphate. Functionally, involved in the post-transcriptional modification of the uridine at the wobble position (U34) of tRNA(Lys), tRNA(Glu) and tRNA(Gln). Catalyzes the conversion of 2-thiouridine (S2U-RNA) to 2-selenouridine (Se2U-RNA). Acts in a two-step process involving geranylation of 2-thiouridine (S2U) to S-geranyl-2-thiouridine (geS2U) and subsequent selenation of the latter derivative to 2-selenouridine (Se2U) in the tRNA chain. The chain is tRNA 2-selenouridine synthase from Shewanella woodyi (strain ATCC 51908 / MS32).